A 419-amino-acid chain; its full sequence is Serine hydroxymethyltransferase (419 aa).

(6S)-5,6,7,8-tetrahydrofolate contacts are provided by residues Leu119 and 123–125 (GHL). An N6-(pyridoxal phosphate)lysine modification is found at Lys228.

The protein belongs to the SHMT family. In terms of assembly, homodimer. The cofactor is pyridoxal 5'-phosphate.

It is found in the cytoplasm. The enzyme catalyses (6R)-5,10-methylene-5,6,7,8-tetrahydrofolate + glycine + H2O = (6S)-5,6,7,8-tetrahydrofolate + L-serine. Its pathway is one-carbon metabolism; tetrahydrofolate interconversion. It participates in amino-acid biosynthesis; glycine biosynthesis; glycine from L-serine: step 1/1. In terms of biological role, catalyzes the reversible interconversion of serine and glycine with tetrahydrofolate (THF) serving as the one-carbon carrier. This reaction serves as the major source of one-carbon groups required for the biosynthesis of purines, thymidylate, methionine, and other important biomolecules. Also exhibits THF-independent aldolase activity toward beta-hydroxyamino acids, producing glycine and aldehydes, via a retro-aldol mechanism. The chain is Serine hydroxymethyltransferase from Desulfosudis oleivorans (strain DSM 6200 / JCM 39069 / Hxd3) (Desulfococcus oleovorans).